A 74-amino-acid polypeptide reads, in one-letter code: Cytochrome c oxidase assembly factor 5 (74 aa).

A CHCH domain is found at 27-65; it reads QSDCVLKEGKSPRQCLKEGNCKALKYSFFECKRSMLDAR. The Cx10C motif signature appears at 30–41; sequence CVLKEGKSPRQC. 2 disulfide bridges follow: Cys-30–Cys-57 and Cys-41–Cys-47. Position 37 is a phosphoserine (Ser-37). Residues 47–57 carry the Cx9C motif motif; the sequence is CKALKYSFFEC.

This sequence belongs to the PET191 family.

In terms of biological role, involved in an early step of the mitochondrial complex IV assembly process. The polypeptide is Cytochrome c oxidase assembly factor 5 (COA5) (Bos taurus (Bovine)).